The chain runs to 22 residues: Putative ORF3b protein (22 aa).

In terms of biological role, acts as an interferon antagonist when expressed ex vivo. This Severe acute respiratory syndrome coronavirus 2 (2019-nCoV) protein is Putative ORF3b protein.